The chain runs to 1372 residues: DNA-directed RNA polymerase subunit beta' (1372 aa).

Residues C69, C71, C84, and C87 each contribute to the Zn(2+) site. Mg(2+)-binding residues include D460, D462, and D464. Residues C808, C882, C889, and C892 each contribute to the Zn(2+) site.

The protein belongs to the RNA polymerase beta' chain family. As to quaternary structure, the RNAP catalytic core consists of 2 alpha, 1 beta, 1 beta' and 1 omega subunit. When a sigma factor is associated with the core the holoenzyme is formed, which can initiate transcription. Mg(2+) is required as a cofactor. Zn(2+) serves as cofactor.

The catalysed reaction is RNA(n) + a ribonucleoside 5'-triphosphate = RNA(n+1) + diphosphate. Functionally, DNA-dependent RNA polymerase catalyzes the transcription of DNA into RNA using the four ribonucleoside triphosphates as substrates. The chain is DNA-directed RNA polymerase subunit beta' from Rickettsia felis (strain ATCC VR-1525 / URRWXCal2) (Rickettsia azadi).